A 107-amino-acid polypeptide reads, in one-letter code: C-X-C motif chemokine 2 (107 aa).

The N-terminal stretch at 1–34 is a signal peptide; that stretch reads MARATLSAAPSNPRLLRVALLLLLLVAASRRAAG. 2 disulfide bridges follow: Cys-43-Cys-69 and Cys-45-Cys-85.

It belongs to the intercrine alpha (chemokine CxC) family. The N-terminal processed form GRO-beta(5-73) is produced by proteolytic cleavage after secretion from bone marrow stromal cells.

The protein localises to the secreted. Functionally, produced by activated monocytes and neutrophils and expressed at sites of inflammation. Hematoregulatory chemokine, which, in vitro, suppresses hematopoietic progenitor cell proliferation. GRO-beta(5-73) shows a highly enhanced hematopoietic activity. The protein is C-X-C motif chemokine 2 (CXCL2) of Homo sapiens (Human).